The primary structure comprises 35 residues: Kappa-stichotoxin-She3a (35 aa).

One can recognise a ShKT domain in the interval 3–35 (CIDTIPKSRCTAFQCKHSMKYRLSFCRKTCGTC). Disulfide bonds link cysteine 3–cysteine 35, cysteine 12–cysteine 28, and cysteine 17–cysteine 32.

Belongs to the sea anemone type 1 potassium channel toxin family. Type 1a subfamily.

It localises to the secreted. It is found in the nematocyst. Functionally, peptide with both antimicrobial and neurotoxin activities. Inhibits voltage-dependent potassium channels. Potently blocks Kv1.1/KCNA1 (IC(50)=6.7-87 pM) and Kv1.3/KCNA3 (IC(50)=10-250 pM). Less potently blocks Kv1.4/KCNA4 (IC(50)=0.31 nM), and Kv1.6/KCNA6 (IC(50)=0.16 nM). Shows moderate activity on Kv1.2/KCNA2 (IC(50)=9 nM), Kv1.7/KCNA7 (IC(50)=11.5 nM), and KCa3.1/KCNN4 (Kd=0.03-30 nM). Blocks Kv channels by binding to a shallow vestibule at the outer entrance to the ion conduction pathway and occluding the entrance to the pore. Shows antibacterial activity against all tested bacteria (the Gram-positive bacteria B.subtilis and S.aureus, and the Gram-negative bacteria S.typhimurium and P.aeruginosa). The polypeptide is Kappa-stichotoxin-She3a (Stichodactyla helianthus (Sun anemone)).